Consider the following 133-residue polypeptide: ATP synthase epsilon chain, chloroplastic (133 aa).

Belongs to the ATPase epsilon chain family. As to quaternary structure, F-type ATPases have 2 components, CF(1) - the catalytic core - and CF(0) - the membrane proton channel. CF(1) has five subunits: alpha(3), beta(3), gamma(1), delta(1), epsilon(1). CF(0) has three main subunits: a, b and c.

It localises to the plastid. Its subcellular location is the chloroplast thylakoid membrane. In terms of biological role, produces ATP from ADP in the presence of a proton gradient across the membrane. The polypeptide is ATP synthase epsilon chain, chloroplastic (Citrus sinensis (Sweet orange)).